Consider the following 95-residue polypeptide: MTTRGSNDVVHFFDLSLGSGERTQSLLGDLSGSLFTGVSDQIDQSSFIWGQTGDFSNQRSDELGSVGGSTLLVGDLWGWSHLGDFLTLVQTNSDT.

This is an uncharacterized protein from Saccharomyces cerevisiae (strain ATCC 204508 / S288c) (Baker's yeast).